The chain runs to 1506 residues: Transient receptor potential cation channel subfamily M member 2 (1506 aa).

The span at 1-11 shows a compositional bias: basic and acidic residues; the sequence is MESLDRRRTGS. The interval 1 to 22 is disordered; the sequence is MESLDRRRTGSEQEEGFGVQSR. The Cytoplasmic segment spans residues 1 to 750; sequence MESLDRRRTG…WWGQLCVDNG (750 aa). Positions 173, 178, 301, 332, and 335 each coordinate ADP-D-ribose. A Phosphothreonine modification is found at threonine 738. The stretch at 751 to 767 is an intramembrane region; it reads LWRIILCMLAFPLLFTG. Topologically, residues 768 to 792 are cytoplasmic; the sequence is FISFREKRLQALCRPARVRAFFNAP. The helical transmembrane segment at 793–813 threads the bilayer; it reads VVIFHMNILSYFAFLCLFAYV. Residues 814–824 lie on the Extracellular side of the membrane; it reads LMVDFQPSPSW. The helical transmembrane segment at 825–845 threads the bilayer; that stretch reads CEYLIYLWLFSLVCEETRQLF. Ca(2+) is bound by residues glutamate 840 and glutamine 843. Residues 846–864 are Cytoplasmic-facing; sequence YDPDGCGLMKMASLYFSDF. The chain crosses the membrane as a helical span at residues 865–885; it reads WNKLDVGAILLFIVGLTCRLI. Asparagine 866 contacts Ca(2+). Topologically, residues 886-893 are extracellular; the sequence is PATLYPGR. The chain crosses the membrane as a helical span at residues 894-914; that stretch reads IILSLDFIMFCLRLMHIFTIS. The Cytoplasmic segment spans residues 915–926; that stretch reads KTLGPKIIIVKR. A helical membrane pass occupies residues 927–947; that stretch reads MMKDVFFFLFLLAVWVVSFGV. Residues 948–967 are Extracellular-facing; sequence AKQAILIHNESRVDWIFRGV. An intramembrane region (pore-forming) is located at residues 968-982; it reads VYHSYLTIFGQIPTY. The short motif at 976–979 is the Selectivity filter element; sequence FGQI. Topologically, residues 983 to 1019 are extracellular; the sequence is IDGVNFSMDQCSPNGTDPYKPKCPESDWTGQAPAFPE. Cysteine 993 and cysteine 1005 are disulfide-bonded. Residues 1020 to 1041 traverse the membrane as a helical segment; sequence WLTVTLLCLYLLFANILLLNLL. Residues 1042–1076 are Cytoplasmic-facing; it reads IAMFNYTFQEVQEHTDQIWKFQRHDLIEEYHGRPP. A Ca(2+)-binding site is contributed by glutamate 1070. The stretch at 1077-1095 is an intramembrane region; the sequence is APPPLILLSHLQLLIKRIV. The Cytoplasmic segment spans residues 1096–1506; the sequence is LKIPAKRHKQ…KVASLFGAHF (411 aa). Residues 1350–1501 form the Nudix hydrolase domain; it reads RWKRNQGGAI…KTILQKVASL (152 aa). Residue serine 1378 coordinates ADP-D-ribose. Residues 1386-1407 carry the Nudix box motif; sequence GSREPGEMLPRKLKRVLRQEFW. 4 residues coordinate ADP-D-ribose: aspartate 1427, arginine 1429, tyrosine 1488, and asparagine 1490.

The protein belongs to the transient receptor (TC 1.A.4) family. LTrpC subfamily. TRPM2 sub-subfamily. As to quaternary structure, homotetramer. Post-translationally, protein kinase C (PKC)-mediated phosphorylation of TRPM2 at Thr-738 counteracts the effect of cytosolic Ca(2+) and elevates the temperature threshold. In terms of tissue distribution, detected in the preoptic area of the hypothalamus, a brain area involved in body temperature control. Detected in beta-cells in pancreas islets (at protein level). Detected in brain cortex, striatum, hippocampus CA1, CA2 and CA3 layers, and in the Purkinje cell layer in cerebellum. Widely expressed, with highest levels in lung, spleen, eye and brain. Detected in dendritic cells and in polymorphonuclear neutrophils.

Its subcellular location is the cell membrane. The protein localises to the perikaryon. It is found in the cell projection. It localises to the cytoplasmic vesicle. The protein resides in the lysosome. It carries out the reaction Ca(2+)(in) = Ca(2+)(out). The enzyme catalyses Na(+)(in) = Na(+)(out). Its activity is regulated as follows. Activated by intracellular ADP-ribose, beta-NAD (NAD(+)) and similar compounds, and by oxidative stress caused by reactive oxygen or nitrogen species. Ca(2+) and PI(4,5)P2 are required for channel opening by ADP-ribose. Activated by moderate heat (35 to 40 degrees Celsius). Activation by ADP-ribose and beta-NAD is strongly increased by moderate heat (35 to 40 degrees Celsius). Likewise, reactive oxygen species lower the threshold for activation by moderate heat (37 degrees Celsius). Inactivated by exposure to extracellular pH between 4.0 and 6.5; irreversibly inactivated when open channels are exposed to extracellular pH between 4.0 and 6.5, while pre-exposure of closed channels to extracellular pH 5.5 gives rise to currents that rapidly inactivate, but protects against irreversible inactivation. Inactivated by intracellular ATP. Activated by arachidonic acid. Inhibited by 2-aminoethyl diphenylborinate (2-APB). Nonselective, voltage-independent cation channel that mediates Na(+) and Ca(2+) influx, leading to increased cytoplasmic Ca(2+) levels. Functions as a ligand-gated ion channel, gated by intracellular adenosine diphosphate ribose (ADP-ribose), Ca(2+), warm temperature, and oxidative stress. The precise physiological activators are under debate; the true, physiological activators may be ADP-ribose and ADP-ribose-2'-phosphate. Binding of ADP-ribose to the cytoplasmic Nudix domain causes a conformation change; the channel is primed but still requires Ca(2+) binding to trigger channel opening. Extracellular Ca(2+) passes through the channel and increases channel activity. Also contributes to Ca(2+) release from intracellular stores in response to ADP-ribose. Plays a role in numerous processes that involve signaling via intracellular Ca(2+) levels. Besides, mediates the release of lysosomal Zn(2+) stores in response to reactive oxygen species, leading to increased cytosolic Zn(2+) levels. Plays a role in mediating behavorial and physiological responses to moderate heat and thereby contributes to body temperature homeostasis. Plays a role in insulin secretion, a process that requires increased cytoplasmic Ca(2+) levels. Required for normal IFNG and cytokine secretion and normal innate immune immunity in response to bacterial infection. Required for normal phagocytosis and cytokine release by macrophages exposed to zymosan (in vitro). Plays a role in dendritic cell differentiation and maturation, and in dendritic cell chemotaxis via its role in regulating cytoplasmic Ca(2+) levels. Plays a role in the regulation of the reorganization of the actin cytoskeleton and filopodia formation in response to reactive oxygen species via its function in increasing cytoplasmic Ca(2+) and Zn(2+) levels. Confers susceptibility to cell death following oxidative stress. The chain is Transient receptor potential cation channel subfamily M member 2 (Trpm2) from Mus musculus (Mouse).